The chain runs to 311 residues: tRNA(Ile)-lysidine synthase (311 aa).

31-36 (SGGKDS) provides a ligand contact to ATP.

Belongs to the tRNA(Ile)-lysidine synthase family.

It localises to the cytoplasm. It carries out the reaction cytidine(34) in tRNA(Ile2) + L-lysine + ATP = lysidine(34) in tRNA(Ile2) + AMP + diphosphate + H(+). In terms of biological role, ligates lysine onto the cytidine present at position 34 of the AUA codon-specific tRNA(Ile) that contains the anticodon CAU, in an ATP-dependent manner. Cytidine is converted to lysidine, thus changing the amino acid specificity of the tRNA from methionine to isoleucine. This is tRNA(Ile)-lysidine synthase from Petrotoga mobilis (strain DSM 10674 / SJ95).